The chain runs to 82 residues: Polyketide biosynthesis acyl-carrier-protein AcpK (82 aa).

The region spanning 4-79 is the Carrier domain; sequence QRIFEVLITN…ELAEVLYDKV (76 aa). Ser39 is subject to O-(pantetheine 4'-phosphoryl)serine.

In terms of processing, 4'-phosphopantetheine is transferred from CoA to a specific serine of apo-ACP by sfp.

Its subcellular location is the cytoplasm. It participates in antibiotic biosynthesis; bacillaene biosynthesis. Its function is as follows. Involved in some intermediate steps for the synthesis of the antibiotic polyketide bacillaene which is involved in secondary metabolism. The polypeptide is Polyketide biosynthesis acyl-carrier-protein AcpK (acpK) (Bacillus subtilis (strain 168)).